Reading from the N-terminus, the 442-residue chain is Chromosomal replication initiator protein DnaA (442 aa).

The segment at 1–75 (MDAWPRCLER…GNGEVALAVG (75 aa)) is domain I, interacts with DnaA modulators. The segment at 75–104 (GSRPRAPEPAPAAAAVPSAPQAAPMVPFAG) is domain II. Residues 105–322 (NLDSHYTFAN…GALNTLVARA (218 aa)) are domain III, AAA+ region. 4 residues coordinate ATP: Gly150, Gly152, Lys153, and Thr154. The segment at 323–442 (NFTGRSITVE…WEKLIRKLSE (120 aa)) is domain IV, binds dsDNA.

The protein belongs to the DnaA family. Oligomerizes as a right-handed, spiral filament on DNA at oriC.

It localises to the cytoplasm. In terms of biological role, plays an essential role in the initiation and regulation of chromosomal replication. ATP-DnaA binds to the origin of replication (oriC) to initiate formation of the DNA replication initiation complex once per cell cycle. Binds the DnaA box (a 9 base pair repeat at the origin) and separates the double-stranded (ds)DNA. Forms a right-handed helical filament on oriC DNA; dsDNA binds to the exterior of the filament while single-stranded (ss)DNA is stabiized in the filament's interior. The ATP-DnaA-oriC complex binds and stabilizes one strand of the AT-rich DNA unwinding element (DUE), permitting loading of DNA polymerase. After initiation quickly degrades to an ADP-DnaA complex that is not apt for DNA replication. Binds acidic phospholipids. The polypeptide is Chromosomal replication initiator protein DnaA (Xanthomonas euvesicatoria pv. vesicatoria (strain 85-10) (Xanthomonas campestris pv. vesicatoria)).